The following is a 405-amino-acid chain: Mevalonate 3,5-bisphosphate decarboxylase (405 aa).

The protein belongs to the mevalonate 3,5-bisphosphate decarboxylase family. As to quaternary structure, homodimer.

The enzyme catalyses (R)-3,5-bisphosphomevalonate + H(+) = isopentenyl phosphate + phosphate + CO2. The protein operates within isoprenoid biosynthesis; isopentenyl diphosphate biosynthesis via mevalonate pathway. In terms of biological role, catalyzes the ATP-independent decarboxylation of (R)-mevalonate 3,5-bisphosphate to isopentenyl phosphate. Functions in an alternative mevalonate pathway, only present in extreme acidophiles of the Thermoplasmatales order, which passes through mevalonate 3-phosphate rather than mevalonate 5-phosphate. In Thermoplasma acidophilum (strain ATCC 25905 / DSM 1728 / JCM 9062 / NBRC 15155 / AMRC-C165), this protein is Mevalonate 3,5-bisphosphate decarboxylase.